A 313-amino-acid chain; its full sequence is Methionyl-tRNA formyltransferase (313 aa).

Residue S111–P114 coordinates (6S)-5,6,7,8-tetrahydrofolate.

It belongs to the Fmt family.

The enzyme catalyses L-methionyl-tRNA(fMet) + (6R)-10-formyltetrahydrofolate = N-formyl-L-methionyl-tRNA(fMet) + (6S)-5,6,7,8-tetrahydrofolate + H(+). Its function is as follows. Attaches a formyl group to the free amino group of methionyl-tRNA(fMet). The formyl group appears to play a dual role in the initiator identity of N-formylmethionyl-tRNA by promoting its recognition by IF2 and preventing the misappropriation of this tRNA by the elongation apparatus. The chain is Methionyl-tRNA formyltransferase from Mesoplasma florum (strain ATCC 33453 / NBRC 100688 / NCTC 11704 / L1) (Acholeplasma florum).